The sequence spans 160 residues: Cytochrome b6-f complex subunit 4 (160 aa).

Helical transmembrane passes span 36–56 (LLYIFPVVILGTIACNVGLAV), 95–115 (LLGVLLMVSVPAGLLTVPFLE), and 131–151 (TVFLIGTAAALWLGIGATLPI).

Belongs to the cytochrome b family. PetD subfamily. As to quaternary structure, the 4 large subunits of the cytochrome b6-f complex are cytochrome b6, subunit IV (17 kDa polypeptide, petD), cytochrome f and the Rieske protein, while the 4 small subunits are petG, petL, petM and petN. The complex functions as a dimer.

It is found in the plastid. Its subcellular location is the chloroplast thylakoid membrane. Its function is as follows. Component of the cytochrome b6-f complex, which mediates electron transfer between photosystem II (PSII) and photosystem I (PSI), cyclic electron flow around PSI, and state transitions. In Arabidopsis thaliana (Mouse-ear cress), this protein is Cytochrome b6-f complex subunit 4.